We begin with the raw amino-acid sequence, 132 residues long: uncharacterized protein (132 aa).

The disordered stretch occupies residues 68–91 (WSRTSPNSSRSSPRSPASMASTSS).

This is an uncharacterized protein from Streptomyces cacaoi.